We begin with the raw amino-acid sequence, 851 residues long: Transcriptional regulator RFX1 (851 aa).

2 stretches are compositionally biased toward polar residues: residues 1–11 (MSSDQTPQNRN) and 20–34 (PRLQ…STGP). Disordered regions lie at residues 1 to 121 (MSSD…EPHP), 134 to 170 (QSQF…PQTY), and 195 to 230 (HEAS…TGEN). Residues 38–53 (QQRERSQEQESDHEHQ) show a composition bias toward basic and acidic residues. The segment covering 54 to 84 (QAQQHLHQFQQSNLTPSTTAFPSSTSIPTFS) has biased composition (low complexity). Polar residues predominate over residues 85 to 114 (KQDQGYHNQFSSPQSSYRKIGNFAQSSNAP). Positions 141–170 (YSSPYIGQSQSQSQSQSQAQPQPHPQPQTY) are enriched in low complexity. Polar residues predominate over residues 199-211 (SADNDSATNITTP). Positions 282–357 (GMVWLLNSCD…YHYCGIKLTG (76 aa)) form a DNA-binding region, RFX-type winged-helix. 2 disordered regions span residues 368 to 411 (YQQK…SVSY) and 783 to 806 (PPSL…TGTQ). Positions 384–393 (AQVGSSTSSA) are enriched in polar residues. The segment covering 783–797 (PPSLSSLPQTQQQNP) has biased composition (low complexity).

This sequence belongs to the RFX family.

The protein resides in the nucleus. Functionally, transcription factor involved in DNA damage responses, morphogenesis, and virulence. The protein is Transcriptional regulator RFX1 (RFX1) of Candida albicans (strain SC5314 / ATCC MYA-2876) (Yeast).